We begin with the raw amino-acid sequence, 596 residues long: Protein NRT1/ PTR FAMILY 3.1 (596 aa).

Residues 1–16 (MEEQSKNKISEEEKQL) show a composition bias toward basic and acidic residues. Residues 1 to 23 (MEEQSKNKISEEEKQLHGRPNRP) form a disordered region. A run of 12 helical transmembrane segments spans residues 27–47 (LITM…VVGF), 73–93 (FAGT…SFAG), 98–118 (ITFA…SAII), 137–157 (TAQL…SGGI), 185–205 (NWYY…LVWI), 213–233 (LGLG…VGGF), 334–354 (MGPI…QGTF), 372–392 (IPAG…IIFY), 416–436 (MGIG…VEVK), 453–473 (IVPI…VAEA), 497–517 (ALFW…VTLV), and 542–562 (YFYW…LWCA).

This sequence belongs to the major facilitator superfamily. Proton-dependent oligopeptide transporter (POT/PTR) (TC 2.A.17) family. In terms of tissue distribution, expressed in shoots, stems, leaves, flowers and siliques.

The protein resides in the membrane. In terms of biological role, may act as an efflux-type nitrite transporter. Not regulated by the PII protein involved in the regulation of nitrite uptake into higher plant chloroplasts. The protein is Protein NRT1/ PTR FAMILY 3.1 (NPF3.1) of Arabidopsis thaliana (Mouse-ear cress).